We begin with the raw amino-acid sequence, 318 residues long: Acetyl-coenzyme A carboxylase carboxyl transferase subunit alpha (318 aa).

One can recognise a CoA carboxyltransferase C-terminal domain in the interval 39–292 (LTDKSEKQLR…GDSIAAELPD (254 aa)).

The protein belongs to the AccA family. Acetyl-CoA carboxylase is a heterohexamer composed of biotin carboxyl carrier protein (AccB), biotin carboxylase (AccC) and two subunits each of ACCase subunit alpha (AccA) and ACCase subunit beta (AccD).

The protein resides in the cytoplasm. The catalysed reaction is N(6)-carboxybiotinyl-L-lysyl-[protein] + acetyl-CoA = N(6)-biotinyl-L-lysyl-[protein] + malonyl-CoA. It functions in the pathway lipid metabolism; malonyl-CoA biosynthesis; malonyl-CoA from acetyl-CoA: step 1/1. Functionally, component of the acetyl coenzyme A carboxylase (ACC) complex. First, biotin carboxylase catalyzes the carboxylation of biotin on its carrier protein (BCCP) and then the CO(2) group is transferred by the carboxyltransferase to acetyl-CoA to form malonyl-CoA. The polypeptide is Acetyl-coenzyme A carboxylase carboxyl transferase subunit alpha (Gluconacetobacter diazotrophicus (strain ATCC 49037 / DSM 5601 / CCUG 37298 / CIP 103539 / LMG 7603 / PAl5)).